Reading from the N-terminus, the 272-residue chain is CD40 ligand (272 aa).

The Cytoplasmic segment spans residues 1–23; that stretch reads MNEAYSPAAPRPMGSTSPSTMKM. A helical; Signal-anchor for type II membrane protein transmembrane segment spans residues 24–44; sequence FMCFLSVFMVVQTIGTVLFCL. Over 45–272 the chain is Extracellular; the sequence is YLHMKMDKME…GNTYFGMFKL (228 aa). N-linked (GlcNAc...) asparagine glycosylation is found at Asn-124 and Asn-146. A THD domain is found at 136-272; that stretch reads IATHLAGVKS…GNTYFGMFKL (137 aa). A disulfide bridge connects residues Cys-190 and Cys-229. N-linked (GlcNAc...) asparagine glycosylation is present at Asn-251.

Belongs to the tumor necrosis factor family. Homotrimer. Interacts with CD28. CD40 ligand, soluble form: Exists as either a monomer or a homotrimer. Forms a ternary complex between CD40 and integrins for CD40-CD40LG signaling. Post-translationally, the soluble form derives from the membrane form by proteolytic processing.

It localises to the cell membrane. It is found in the cell surface. The protein localises to the secreted. In terms of biological role, cytokine that acts as a ligand to CD40/TNFRSF5. Costimulates T-cell proliferation and cytokine production. Induces the activation of NF-kappa-B. Mediates B-cell proliferation in the absence of co-stimulus as well as IgE production in the presence of IL4. Involved in immunoglobulin class switching. Its function is as follows. Acts as a ligand for integrins, specifically ITGA5:ITGB1 and ITGAV:ITGB3; both integrins and the CD40 receptor are required for activation of CD40-CD40LG signaling, which have cell-type dependent effects, such as B-cell activation, NF-kappa-B signaling and anti-apoptotic signaling. In Gallus gallus (Chicken), this protein is CD40 ligand (CD40LG).